The primary structure comprises 308 residues: Methionyl-tRNA formyltransferase (308 aa).

109 to 112 serves as a coordination point for (6S)-5,6,7,8-tetrahydrofolate; sequence SLLP.

Belongs to the Fmt family.

It catalyses the reaction L-methionyl-tRNA(fMet) + (6R)-10-formyltetrahydrofolate = N-formyl-L-methionyl-tRNA(fMet) + (6S)-5,6,7,8-tetrahydrofolate + H(+). Functionally, attaches a formyl group to the free amino group of methionyl-tRNA(fMet). The formyl group appears to play a dual role in the initiator identity of N-formylmethionyl-tRNA by promoting its recognition by IF2 and preventing the misappropriation of this tRNA by the elongation apparatus. This is Methionyl-tRNA formyltransferase from Caulobacter vibrioides (strain NA1000 / CB15N) (Caulobacter crescentus).